We begin with the raw amino-acid sequence, 339 residues long: GTP 3',8-cyclase (339 aa).

One can recognise a Radical SAM core domain in the interval 13–249 (RYGRPLRDLR…GEVAQRHAFA (237 aa)). Arg-22 serves as a coordination point for GTP. [4Fe-4S] cluster-binding residues include Cys-29 and Cys-33. Tyr-35 provides a ligand contact to S-adenosyl-L-methionine. Cys-36 contacts [4Fe-4S] cluster. Arg-75 contributes to the GTP binding site. Gly-79 is a binding site for S-adenosyl-L-methionine. A GTP-binding site is contributed by Thr-106. Ser-130 serves as a coordination point for S-adenosyl-L-methionine. Residue Lys-168 coordinates GTP. Met-202 serves as a coordination point for S-adenosyl-L-methionine. Positions 266 and 269 each coordinate [4Fe-4S] cluster. 271-273 (RAR) contacts GTP. Residue Cys-283 participates in [4Fe-4S] cluster binding.

It belongs to the radical SAM superfamily. MoaA family. As to quaternary structure, monomer and homodimer. It depends on [4Fe-4S] cluster as a cofactor.

The enzyme catalyses GTP + AH2 + S-adenosyl-L-methionine = (8S)-3',8-cyclo-7,8-dihydroguanosine 5'-triphosphate + 5'-deoxyadenosine + L-methionine + A + H(+). It functions in the pathway cofactor biosynthesis; molybdopterin biosynthesis. Its function is as follows. Catalyzes the cyclization of GTP to (8S)-3',8-cyclo-7,8-dihydroguanosine 5'-triphosphate. This chain is GTP 3',8-cyclase, found in Xanthomonas campestris pv. campestris (strain 8004).